Consider the following 843-residue polypeptide: INO80 complex subunit D-B (843 aa).

Residues Thr-159–His-175 are compositionally biased toward basic and acidic residues. Disordered regions lie at residues Thr-159–Arg-216, Phe-221–Asn-240, Tyr-503–Gly-550, Ser-695–Asp-726, and Leu-791–Pro-843. Composition is skewed to polar residues over residues Leu-176–His-187, Arg-197–Arg-216, and Phe-221–His-231. Positions Tyr-503 to Gln-540 are enriched in basic residues. Pro residues predominate over residues Pro-705–Pro-717. A compositionally biased stretch (low complexity) spans Gln-796 to Thr-821.

Belongs to the INO80D family. Component of the chromatin-remodeling INO80 complex.

It localises to the nucleus. Functionally, putative regulatory component of the chromatin remodeling INO80 complex which is involved in transcriptional regulation, DNA replication and probably DNA repair. This Danio rerio (Zebrafish) protein is INO80 complex subunit D-B (ino80db).